Reading from the N-terminus, the 199-residue chain is NAD(P)H dehydrogenase (quinone) (199 aa).

The 187-residue stretch at 4–190 (VLVLYYSTYG…EGARHQGELI (187 aa)) folds into the Flavodoxin-like domain. FMN contacts are provided by residues 10-15 (STYGHV) and 78-80 (TRF). Tyrosine 12 is an NAD(+) binding site. Tryptophan 98 contributes to the substrate binding site. FMN contacts are provided by residues 113 to 119 (STATQHG) and histidine 134.

Belongs to the WrbA family. Requires FMN as cofactor.

It carries out the reaction a quinone + NADH + H(+) = a quinol + NAD(+). The catalysed reaction is a quinone + NADPH + H(+) = a quinol + NADP(+). The sequence is that of NAD(P)H dehydrogenase (quinone) from Cupriavidus metallidurans (strain ATCC 43123 / DSM 2839 / NBRC 102507 / CH34) (Ralstonia metallidurans).